Here is a 216-residue protein sequence, read N- to C-terminus: Fibroblast growth factor 17 (216 aa).

The N-terminal stretch at 1-22 (MGAARLLPNLTLCLQLLILCCQ) is a signal peptide. Asparagine 137 carries an N-linked (GlcNAc...) asparagine glycan. Residues 195 to 216 (FEFVGSAPTRRTKRTRRPQSQT) are disordered. Residues 204-216 (RRTKRTRRPQSQT) show a composition bias toward basic residues.

The protein belongs to the heparin-binding growth factors family. As to quaternary structure, interacts with FGFR3 and FGFR4.

Its subcellular location is the secreted. Plays an important role in the regulation of embryonic development and as signaling molecule in the induction and patterning of the embryonic brain. Required for normal brain development. The protein is Fibroblast growth factor 17 (Fgf17) of Mus musculus (Mouse).